We begin with the raw amino-acid sequence, 151 residues long: Ribosome maturation factor RimP (151 aa).

The protein belongs to the RimP family.

The protein localises to the cytoplasm. Its function is as follows. Required for maturation of 30S ribosomal subunits. This Colwellia psychrerythraea (strain 34H / ATCC BAA-681) (Vibrio psychroerythus) protein is Ribosome maturation factor RimP.